A 316-amino-acid chain; its full sequence is Phosphate acetyltransferase (316 aa).

This sequence belongs to the phosphate acetyltransferase and butyryltransferase family.

It is found in the cytoplasm. It catalyses the reaction acetyl-CoA + phosphate = acetyl phosphate + CoA. Its pathway is metabolic intermediate biosynthesis; acetyl-CoA biosynthesis; acetyl-CoA from acetate: step 2/2. This Rhizobium meliloti (Ensifer meliloti) protein is Phosphate acetyltransferase (pta).